A 404-amino-acid polypeptide reads, in one-letter code: CD2 homolog (404 aa).

The N-terminal stretch at 1 to 16 (MFITLIFLSYINIVLS) is a signal peptide. Residues 17-225 (NNYWARLNET…QNYFLENIHT (209 aa)) are Extracellular-facing. N-linked (GlcNAc...) asparagine; by host glycosylation is found at Asn24, Asn87, Asn92, Asn96, Asn122, Asn139, Asn167, Asn193, Asn200, and Asn206. 2 disulfides stabilise this stretch: Cys140/Cys207 and Cys147/Cys190. The chain crosses the membrane as a helical span at residues 226–246 (LFYIIIFIVSGLIASIFISII). Over 247–404 (TFLSLRKRKK…ISLIHVDRII (158 aa)) the chain is Cytoplasmic. The disordered stretch occupies residues 260–295 (EIESPPPESNEEEQCQHDDTTSIHEPSPREPLLPKP). Positions 273-287 (QCQHDDTTSIHEPSP) are enriched in basic and acidic residues. Tandem repeats lie at residues 322–327 (NPCPPP), 328–333 (KPCPPP), 334–339 (KPCPPP), 340–345 (KPCPPP), 346–351 (KPCPPP), 352–357 (KPCPPP), and 358–363 (KPCPPP). Positions 322 to 363 (NPCPPPKPCPPPKPCPPPKPCPPPKPCPPPKPCPPPKPCPPP) are 7 X 6 AA tandem repeats of [KN]-P-C-P-P-P. Positions 357–388 (PKPCPPPKPCSSPESYSPPKPLPSIPLLPNIP) are enriched in pro residues. Residues 357-390 (PKPCPPPKPCSSPESYSPPKPLPSIPLLPNIPPL) are disordered.

This sequence belongs to the asfivirus CD2 homolog protein family. As to quaternary structure, both glycosylated and nonglycosylated forms interact (via C-terminus) with the host AP-1 complex. Cleaved into two fragments of 63 kDa and 26 kDa containing respectively the glycosylated N-terminus and the nonglycosylated C-terminus. A full-length 89-kDa glycosylated form also exists.

It is found in the host membrane. It localises to the virion membrane. Its subcellular location is the host Golgi apparatus. In terms of biological role, may play an immunosuppressive role by inhibiting lymphocyte proliferation and subsequently facilitating viral replication and generalization of infection. Responsible for viral hemadsorption, which may help viral spread. Increases virus replication in the tick vector at the step of virus uptake or replication in the tick gut. May play a role in the host Golgi reorganization to yield viral factories. May play a role in host cell penetration. In African swine fever virus (isolate Tick/South Africa/Pretoriuskop Pr4/1996) (ASFV), this protein is CD2 homolog.